The following is a 130-amino-acid chain: Fluoride-specific ion channel FluC (130 aa).

A run of 4 helical transmembrane segments spans residues 3 to 23, 38 to 58, 67 to 87, and 102 to 122; these read FVFL…YFVG, LGTF…GHLA, FGIF…SYGL, and ISYV…GWFL. Na(+) is bound by residues Gly77 and Thr80.

Belongs to the fluoride channel Fluc/FEX (TC 1.A.43) family.

It localises to the cell inner membrane. The catalysed reaction is fluoride(in) = fluoride(out). Its activity is regulated as follows. Na(+) is not transported, but it plays an essential structural role and its presence is essential for fluoride channel function. Fluoride-specific ion channel. Important for reducing fluoride concentration in the cell, thus reducing its toxicity. The polypeptide is Fluoride-specific ion channel FluC (Helicobacter pylori (strain G27)).